Consider the following 214-residue polypeptide: Exosome complex component RRP46 homolog (214 aa).

The protein belongs to the RNase PH family. Homodimer. Component of the RNA exosome complex. Interacts with crn-4; interaction promotes the DNase activity of crn-4. Interacts with crn-3, cps-6 and cyn-13.

Its subcellular location is the cytoplasm. The protein localises to the nucleus. In terms of biological role, non-catalytic component of the RNA exosome complex which has 3'-&gt;5' exoribonuclease activity and participates in a multitude of cellular RNA processing and degradation events. Involved in apoptotic DNA degradation. In vitro, does not bind or digest single-stranded RNA. In vitro, binds to double-stranded DNA without detectable DNase activity. In Caenorhabditis elegans, this protein is Exosome complex component RRP46 homolog.